The sequence spans 926 residues: Disease resistance protein RPM1 (926 aa).

Positions 10–45 (IGRILSVLENETLLLSGVHGEIDKMKKELLIMKSFL) are leucine-zipper. The 315-residue stretch at 153 to 467 (DAKWVNNISE…AQRFVEPIRG (315 aa)) folds into the NB-ARC domain. An ATP-binding site is contributed by 200-207 (GMGGSGKT). LRR repeat units lie at residues 561–580 (LHSLLVCSSAKHKMELLPSL), 581–603 (NLLRALDLEDSSISKLPDCLVTM), 605–625 (NLKYLNLSKTQVKELPKNFHK), 626–649 (LVNLETLNTKHSKIEELPLGMWKL), 686–707 (LQVMDCFNAEDELIKNLGCMTQ), 708–731 (LTRISLVMVRREHGRDLCDSLNKI), 756–777 (TASIEKLFLAGKLERVPSWFNT), 778–804 (LQNLTYLGLRGSQLQENAILSIQTLPR), 825–836 (FQNLKILEIVQM), 837–859 (KHLTEVVIEDGAMFELQKLYVRA), and 876–900 (LQELHLIHVSNQLVERIRGEGSVDR).

It belongs to the disease resistance NB-LRR family. In terms of assembly, interacts directly with RIN4 via its N-terminal region. Interacts (via N-terminus) with RIN2 and RIN3 (via C-terminus). Interacts with TIP49A, a protein known to interact with the TATA binding protein complex (TBP). Binds to MORC1/CRT1. Interacts, via its NB-ARC domain, with RIN13.

It localises to the endomembrane system. It is found in the cell membrane. Functionally, disease resistance (R) protein that specifically recognizes the AvrRpm1 type III effector avirulence protein from Pseudomonas syringae. Resistance proteins guard the plant against pathogens that contain an appropriate avirulence protein via an indirect interaction with this avirulence protein. That triggers a defense system including the hypersensitive response (HR), which restricts the pathogen growth. Acts via its interaction with RIN4, and probably triggers the plant resistance when RIN4 is phosphorylated by AvrRpm1. It is then degraded at the onset of the hypersensitive response. This chain is Disease resistance protein RPM1, found in Arabidopsis thaliana (Mouse-ear cress).